The sequence spans 1457 residues: MQQQQQPSIDQLPEPTASTSNSATTKPTIATATTSTTTTSGNNFHQQLQATTAATMQRLRTTFTRSRTPTGAEMKMQNSLEVPKQVRSASFDEMQLESQRASSSLLKQQSSSSASADERSSEAGFLQVPLAAHQQRSHSFDSATASAGSDDSGTFLEVPRRLKARRSSSTKTPPPCIHCHYLEEYERRMTAEQRYFIDHRELTALSYSNTSSEASEDEDEVEGHNAEEEEEGSAAIEDAEEETTEAATEEADEDPRTEVESEHDHDPDDDAALEMDIRIGNMSQGSSIEESRARLPRQMRRHTIGSSSVTSASEDEGLEGSDNGSPHFGNTLLPPQPTTPCGITFTLSPTNGDYPSPPHLPLDPGSPPISPCSSNSGRLPALAPIISTPCSSADADDAGAAMGLPVRARRRSISRQEAIFVEPTGNSLENVSHEEVDNSNTKSSVDTADSLDEASTMATCGSPGAAGGSGASSSHHNAFVVRDIYLMVPDLKRDRAASVDSCFSKLSSNAKTEELQPSADGCFLTVPNINATRSRSVDIVLPTDEQARYKALSMTGSTVTYADGRTASASNSRRPIRIVPDWTENAVQGEHYWKPTSASGDLCCLNEECIKSGQRMKCSACQLVAHHNCIPFVNEKSTLACKPTYRDVGIRQYREQTTTHHHWVHRKLEKGKCKQCGKFFPMKQAVQSKLFGSKEIVALACAWCHEIYHNKEACFNQAKIGEECRLGNYAPIIVPPSWIVKLPTKGNFKSSIRVSNKNNAASGSGGGGAGGGAGGGGGKSKKQTQRRQKGKEEKKEPRAFIVKPIPSPEVIPVIVFINPKSGGNQGHKLLGKFQHLLNPRQVFDLTQGGPKMGLDMFRKAPNLRVLACGGDGTVGWVLSVLDQIQPPLQPAPAVGVLPLGTGNDLARALGWGGGYTDEPIGKILREIGMSQCVLMDRWRVKVTPNDDVTDDHVDRSKPNVPLNVINNYFSFGVDAHIALEFHEAREAHPERFNSRLRNKMYYGQMGGKDLILRQYRNLSQWVTLECDGQDFTGKLRDAGCHAVLFLNIPSYGGGTHPWNDSFGASKPSIDDGLMEVVGLTTYQLPMLQAGMHGTCICQCRKARIITKRTIPMQVDGEACRVKPSVIEIELLNKALMLSKRKHGRGDVQVNPLEKMQLHILRVTMQQYEQYHYDKEMLRKLANKLGQIEIESQCDLEHVRNMLNTKFEESISYPKVSQDWCFIDSCTAEHYFRIDRAQEHLHYICDIAIDELYILDHEAATMPQTPDQERSFAAFSQRQAQNERRQMDQAQGRGPGSTDEDLQIGSKPIKVMKWKSPILEQTSDAILLAAQSGDLNMLRALHEQGYSLQSVNKNGQTALHFACKYNHRDIVKYIIASATRRLINMADKELGQTALHIAAEQNRRDICVMLVAAGAHLDTLDSGGNTPMMVAFNKNANEIATYLESKQGTQPVDGWLDD.

3 disordered regions span residues 1–123 (MQQQ…SSEA), 136–177 (RSHS…PPCI), and 207–339 (YSNT…QPTT). Low complexity-rich tracts occupy residues 22 to 62 (SATT…LRTT), 98 to 115 (SQRA…SSAS), and 141 to 154 (DSAT…DSGT). Residues 214-253 (ASEDEDEVEGHNAEEEEEGSAAIEDAEEETTEAATEEADE) show a composition bias toward acidic residues. Over residues 254–266 (DPRTEVESEHDHD) the composition is skewed to basic and acidic residues. Residues 294 to 303 (RLPRQMRRHT) show a composition bias toward basic residues. 2 Phorbol-ester/DAG-type zinc fingers span residues 591–641 (HYWK…TLAC) and 661–724 (HHWV…GEEC). The tract at residues 758 to 799 (NNAASGSGGGGAGGGAGGGGGKSKKQTQRRQKGKEEKKEPRA) is disordered. The span at 763–778 (GSGGGGAGGGAGGGGG) shows a compositional bias: gly residues. The segment covering 779–789 (KSKKQTQRRQK) has biased composition (basic residues). The 137-residue stretch at 808–944 (PEVIPVIVFI…MDRWRVKVTP (137 aa)) folds into the DAGKc domain. A disordered region spans residues 1264 to 1302 (TPDQERSFAAFSQRQAQNERRQMDQAQGRGPGSTDEDLQ). ANK repeat units lie at residues 1320 to 1349 (QTSD…SLQS), 1353 to 1382 (NGQT…RRLI), 1389 to 1418 (LGQT…HLDT), and 1422 to 1451 (GGNT…TQPV).

The protein belongs to the eukaryotic diacylglycerol kinase family. Expressed specifically in adult eye.

The protein localises to the membrane. The enzyme catalyses a 1,2-diacyl-sn-glycerol + ATP = a 1,2-diacyl-sn-glycero-3-phosphate + ADP + H(+). Its function is as follows. Required for the maintenance of phospholipid turnover within the photoreceptor. The protein is Eye-specific diacylglycerol kinase (rdgA) of Drosophila melanogaster (Fruit fly).